The following is a 224-amino-acid chain: Ribonuclease T (224 aa).

Positions 20 to 195 constitute an Exonuclease domain; the sequence is VVIDVETAGF…YDTQKTAELF (176 aa). Mg(2+)-binding residues include Asp-23, Glu-25, His-182, and Asp-187. The active-site Proton donor/acceptor is the His-182.

This sequence belongs to the RNase T family. Homodimer. Mg(2+) is required as a cofactor.

Functionally, trims short 3' overhangs of a variety of RNA species, leaving a one or two nucleotide 3' overhang. Responsible for the end-turnover of tRNA: specifically removes the terminal AMP residue from uncharged tRNA (tRNA-C-C-A). Also appears to be involved in tRNA biosynthesis. In Vibrio cholerae serotype O1 (strain ATCC 39315 / El Tor Inaba N16961), this protein is Ribonuclease T.